We begin with the raw amino-acid sequence, 165 residues long: Xanthine-guanine phosphoribosyltransferase (165 aa).

5-phospho-alpha-D-ribose 1-diphosphate is bound by residues 41–42 and 98–106; these read RG and DDLTDTGKT. Asp-99 is a Mg(2+) binding site. Guanine contacts are provided by Asp-102 and Ile-145. Asp-102 and Ile-145 together coordinate xanthine. GMP is bound by residues 102 to 106 and 144 to 145; these read DTGKT and WI.

This sequence belongs to the purine/pyrimidine phosphoribosyltransferase family. XGPT subfamily. In terms of assembly, homotetramer. Mg(2+) serves as cofactor.

The protein resides in the cell inner membrane. It catalyses the reaction GMP + diphosphate = guanine + 5-phospho-alpha-D-ribose 1-diphosphate. The enzyme catalyses XMP + diphosphate = xanthine + 5-phospho-alpha-D-ribose 1-diphosphate. The catalysed reaction is IMP + diphosphate = hypoxanthine + 5-phospho-alpha-D-ribose 1-diphosphate. Its pathway is purine metabolism; GMP biosynthesis via salvage pathway; GMP from guanine: step 1/1. It functions in the pathway purine metabolism; XMP biosynthesis via salvage pathway; XMP from xanthine: step 1/1. Functionally, purine salvage pathway enzyme that catalyzes the transfer of the ribosyl-5-phosphate group from 5-phospho-alpha-D-ribose 1-diphosphate (PRPP) to the N9 position of the 6-oxopurines guanine and xanthine to form the corresponding ribonucleotides GMP (guanosine 5'-monophosphate) and XMP (xanthosine 5'-monophosphate), with the release of PPi. To a lesser extent, also acts on hypoxanthine. In Agrobacterium fabrum (strain C58 / ATCC 33970) (Agrobacterium tumefaciens (strain C58)), this protein is Xanthine-guanine phosphoribosyltransferase.